The primary structure comprises 368 residues: tRNA 2-selenouridine synthase (368 aa).

In terms of domain architecture, Rhodanese spans phenylalanine 15–glutamate 138. The S-selanylcysteine intermediate role is filled by cysteine 98.

It belongs to the SelU family. As to quaternary structure, monomer.

It catalyses the reaction 5-methylaminomethyl-2-thiouridine(34) in tRNA + selenophosphate + (2E)-geranyl diphosphate + H2O + H(+) = 5-methylaminomethyl-2-selenouridine(34) in tRNA + (2E)-thiogeraniol + phosphate + diphosphate. It carries out the reaction 5-methylaminomethyl-2-thiouridine(34) in tRNA + (2E)-geranyl diphosphate = 5-methylaminomethyl-S-(2E)-geranyl-thiouridine(34) in tRNA + diphosphate. The catalysed reaction is 5-methylaminomethyl-S-(2E)-geranyl-thiouridine(34) in tRNA + selenophosphate + H(+) = 5-methylaminomethyl-2-(Se-phospho)selenouridine(34) in tRNA + (2E)-thiogeraniol. The enzyme catalyses 5-methylaminomethyl-2-(Se-phospho)selenouridine(34) in tRNA + H2O = 5-methylaminomethyl-2-selenouridine(34) in tRNA + phosphate. In terms of biological role, involved in the post-transcriptional modification of the uridine at the wobble position (U34) of tRNA(Lys), tRNA(Glu) and tRNA(Gln). Catalyzes the conversion of 2-thiouridine (S2U-RNA) to 2-selenouridine (Se2U-RNA). Acts in a two-step process involving geranylation of 2-thiouridine (S2U) to S-geranyl-2-thiouridine (geS2U) and subsequent selenation of the latter derivative to 2-selenouridine (Se2U) in the tRNA chain. This is tRNA 2-selenouridine synthase from Shewanella baltica (strain OS185).